Consider the following 253-residue polypeptide: Low affinity immunoglobulin gamma Fc region receptor III-B (253 aa).

A signal peptide spans 1 to 20 (MGQPLPPVALLLLVSASSRA). At 21 to 207 (ADVPKALVLL…VSSSVLPWHQ (187 aa)) the chain is on the extracellular side. 2 consecutive Ig-like C2-type domains span residues 24-105 (PKAL…LRVH) and 120-189 (EGEP…VTIT). 2 disulfides stabilise this stretch: C47–C89 and C128–C172. N-linked (GlcNAc...) asparagine glycans are attached at residues N56, N63, N165, and N180. A helical membrane pass occupies residues 208–226 (IAFCLVMGLLLAADTGLYF). Topologically, residues 227 to 253 (SVQRDLRSSQRARKEHTLGWSLGSQDK) are cytoplasmic.

In terms of assembly, forms a heterooligomeric complex with ITAM-containing signaling subunits FCER1G. Interacts (via transmembrane domain) with signaling subunits; this interaction is a prerequisite for receptor complex expression on the cell surface and intracellular signal transduction. Binds the Fc region of antigen-complexed IgG.

It localises to the cell membrane. Functionally, receptor for the invariable Fc fragment of immunoglobulin gamma (IgG). Optimally activated upon binding of clustered antigen-IgG complexes displayed on cell surfaces, triggers lysis of antibody-coated cells, a process known as antibody-dependent cellular cytotoxicity (ADCC). Does not bind free monomeric IgG, thus avoiding inappropriate effector cell activation in the absence of antigenic trigger. Mediates IgG effector functions on natural killer (NK) cells. Binds antigen-IgG complexes generated upon infection and triggers NK cell-dependent cytokine production and degranulation to limit viral load and propagation. Fc-binding subunit that associates with FCER1G adapters to form functional signaling complexes. Following the engagement of antigen-IgG complexes, triggers phosphorylation of immunoreceptor tyrosine-based activation motif (ITAM)-containing adapters with subsequent activation of phosphatidylinositol 3-kinase signaling and sustained elevation of intracellular calcium that ultimately drive NK cell activation. Mediates enhanced ADCC in response to afucosylated IgGs. This is Low affinity immunoglobulin gamma Fc region receptor III-B (FCGR3B) from Oryctolagus cuniculus (Rabbit).